A 61-amino-acid chain; its full sequence is Small ribosomal subunit protein uS14 (61 aa).

Zn(2+)-binding residues include Cys-24, Cys-27, Cys-40, and Cys-43.

It belongs to the universal ribosomal protein uS14 family. Zinc-binding uS14 subfamily. Part of the 30S ribosomal subunit. Contacts proteins S3 and S10. Requires Zn(2+) as cofactor.

Binds 16S rRNA, required for the assembly of 30S particles and may also be responsible for determining the conformation of the 16S rRNA at the A site. This is Small ribosomal subunit protein uS14 from Rubrobacter xylanophilus (strain DSM 9941 / JCM 11954 / NBRC 16129 / PRD-1).